The sequence spans 305 residues: UDP-3-O-acyl-N-acetylglucosamine deacetylase (305 aa).

Residues His79, His238, and Asp242 each contribute to the Zn(2+) site. The active-site Proton donor is His265.

The protein belongs to the LpxC family. Zn(2+) serves as cofactor.

The catalysed reaction is a UDP-3-O-[(3R)-3-hydroxyacyl]-N-acetyl-alpha-D-glucosamine + H2O = a UDP-3-O-[(3R)-3-hydroxyacyl]-alpha-D-glucosamine + acetate. Its pathway is glycolipid biosynthesis; lipid IV(A) biosynthesis; lipid IV(A) from (3R)-3-hydroxytetradecanoyl-[acyl-carrier-protein] and UDP-N-acetyl-alpha-D-glucosamine: step 2/6. In terms of biological role, catalyzes the hydrolysis of UDP-3-O-myristoyl-N-acetylglucosamine to form UDP-3-O-myristoylglucosamine and acetate, the committed step in lipid A biosynthesis. This chain is UDP-3-O-acyl-N-acetylglucosamine deacetylase, found in Shigella boydii serotype 4 (strain Sb227).